The following is a 155-amino-acid chain: UPF0178 protein RPC_3085 (155 aa).

Belongs to the UPF0178 family.

This chain is UPF0178 protein RPC_3085, found in Rhodopseudomonas palustris (strain BisB18).